A 329-amino-acid polypeptide reads, in one-letter code: Delta-aminolevulinic acid dehydratase (329 aa).

Zn(2+)-binding residues include cysteine 122, cysteine 124, histidine 131, and cysteine 132. Lysine 199 functions as the Schiff-base intermediate with substrate in the catalytic mechanism. Lysine 199 carries the N6-succinyllysine modification. Arginine 209 provides a ligand contact to 5-aminolevulinate. Serine 215 carries the phosphoserine modification. Arginine 221 lines the 5-aminolevulinate pocket. Cysteine 223 lines the Zn(2+) pocket. Residue lysine 252 is the Schiff-base intermediate with substrate of the active site. Lysine 252 bears the N6-succinyllysine mark. 5-aminolevulinate is bound by residues serine 279 and tyrosine 318.

It belongs to the ALAD family. As to quaternary structure, homooctamer; active form. Homohexamer; low activity form. Zn(2+) serves as cofactor.

It is found in the cytoplasm. The protein resides in the cytosol. The catalysed reaction is 2 5-aminolevulinate = porphobilinogen + 2 H2O + H(+). Its pathway is porphyrin-containing compound metabolism; protoporphyrin-IX biosynthesis; coproporphyrinogen-III from 5-aminolevulinate: step 1/4. Can alternate between a fully active homooctamer and a low-activity homohexamer. A bound magnesium ion may promote the assembly of the fully active homooctamer. The magnesium-binding site is absent in the low-activity homohexamer. Inhibited by compounds that favor the hexameric state. Inhibited by divalent lead ions. The lead ions partially displace the zinc cofactor. Functionally, catalyzes an early step in the biosynthesis of tetrapyrroles. Binds two molecules of 5-aminolevulinate per subunit, each at a distinct site, and catalyzes their condensation to form porphobilinogen. The protein is Delta-aminolevulinic acid dehydratase (ALAD) of Bos taurus (Bovine).